The following is a 150-amino-acid chain: MDASTKTKKGAGGRKGGGPRKKSVTRSVRAGLQFPVGRVGRFLKKGRYAQRVGTGAPVYLAAVLEYLAAEVLELAGNAARDNKKNRISPRHLLLAVRNDEELGKLLAGVTIAYGGVLPNINPVLLPKRKENAAASTPKSPSKAKKSPKKA.

M1 is subject to N-acetylmethionine. Composition is skewed to basic residues over residues 1-24 (MDAS…KKSV) and 141-150 (SKAKKSPKKA). Disordered regions lie at residues 1–26 (MDAS…SVTR) and 128–150 (RKEN…PKKA). 2 consecutive short sequence motifs (SPKK motif) follow at residues 139 to 142 (SPSK) and 146 to 149 (SPKK).

It belongs to the histone H2A family. In terms of assembly, the nucleosome is a histone octamer containing two molecules each of H2A, H2B, H3 and H4 assembled in one H3-H4 heterotetramer and two H2A-H2B heterodimers. The octamer wraps approximately 147 bp of DNA. In terms of tissue distribution, high expression in root meristematic tissues, moderate in whole shoot and very low in mature leaves.

It localises to the nucleus. The protein localises to the chromosome. Core component of nucleosome. Nucleosomes wrap and compact DNA into chromatin, limiting DNA accessibility to the cellular machineries which require DNA as a template. Histones thereby play a central role in transcription regulation, DNA repair, DNA replication and chromosomal stability. DNA accessibility is regulated via a complex set of post-translational modifications of histones, also called histone code, and nucleosome remodeling. This Pisum sativum (Garden pea) protein is Histone H2A.1.